The primary structure comprises 207 residues: Vexin (207 aa).

Residues 56–100 (ELLPHRGDRRDPGDRRRFGRLQTARPPTAHPAKASARPVGISEPK) form a disordered region. Positions 58-71 (LPHRGDRRDPGDRR) are enriched in basic and acidic residues.

Belongs to the vexin family.

It is found in the cell membrane. The protein resides in the nucleus. Required for neurogenesis in the neural plate and retina. Strongly cooperates with neural bHLH factors to promote neurogenesis. The protein is Vexin of Homo sapiens (Human).